A 231-amino-acid chain; its full sequence is 2-C-methyl-D-erythritol 4-phosphate cytidylyltransferase (231 aa).

This sequence belongs to the IspD/TarI cytidylyltransferase family. IspD subfamily.

It catalyses the reaction 2-C-methyl-D-erythritol 4-phosphate + CTP + H(+) = 4-CDP-2-C-methyl-D-erythritol + diphosphate. The protein operates within isoprenoid biosynthesis; isopentenyl diphosphate biosynthesis via DXP pathway; isopentenyl diphosphate from 1-deoxy-D-xylulose 5-phosphate: step 2/6. Its function is as follows. Catalyzes the formation of 4-diphosphocytidyl-2-C-methyl-D-erythritol from CTP and 2-C-methyl-D-erythritol 4-phosphate (MEP). The chain is 2-C-methyl-D-erythritol 4-phosphate cytidylyltransferase from Pseudoalteromonas atlantica (strain T6c / ATCC BAA-1087).